The chain runs to 349 residues: MSKIRVLSVDDSALMRQIMTEIINSHSDMEMVATAPDPLVARDLIKKFNPDVLTLDVEMPRMDGLDFLEKLMRLRPMPVVMVSSLTGKGSEVTLRALELGAIDFVTKPQLGIREGMLAYSEMIAEKVRTAAKASLAAHKPLSVPTTLKAGPLLSSEKLIAIGASTGGTEAIRHVLQPLPLSSPALLITQHMPPGFTRSFADRLNKLCQIGVKEAEDGERVLPGHAYIAPGDRHMELARSGANYQIKIHDGPAVNRHRPSVDVLFHSVAKQAGRNAVGVILTGMGNDGAAGMLAMRQAGAWTLAQNEASCVVFGMPREAINMGGVCEVVDLSQVSQQMLAKISAGQAIRI.

The Response regulatory domain maps to 5-122 (RVLSVDDSAL…REGMLAYSEM (118 aa)). Aspartate 56 is modified (4-aspartylphosphate). The region spanning 152–344 (LLSSEKLIAI…QQMLAKISAG (193 aa)) is the CheB-type methylesterase domain. Active-site residues include serine 164, histidine 190, and aspartate 286.

The protein belongs to the CheB family. In terms of processing, phosphorylated by CheA. Phosphorylation of the N-terminal regulatory domain activates the methylesterase activity.

Its subcellular location is the cytoplasm. It catalyses the reaction [protein]-L-glutamate 5-O-methyl ester + H2O = L-glutamyl-[protein] + methanol + H(+). The catalysed reaction is L-glutaminyl-[protein] + H2O = L-glutamyl-[protein] + NH4(+). Its function is as follows. Involved in chemotaxis. Part of a chemotaxis signal transduction system that modulates chemotaxis in response to various stimuli. Catalyzes the demethylation of specific methylglutamate residues introduced into the chemoreceptors (methyl-accepting chemotaxis proteins or MCP) by CheR. Also mediates the irreversible deamidation of specific glutamine residues to glutamic acid. The chain is Protein-glutamate methylesterase/protein-glutamine glutaminase from Escherichia coli O6:K15:H31 (strain 536 / UPEC).